Reading from the N-terminus, the 330-residue chain is ADP-L-glycero-D-manno-heptose-6-epimerase (330 aa).

NADP(+) contacts are provided by residues 11–12 (FI), 32–33 (DN), Lys39, Lys54, 75–79 (EGACS), and Asn92. Residue Tyr139 is the Proton acceptor of the active site. Lys143 lines the NADP(+) pocket. Asn168 contributes to the substrate binding site. Residues Val169 and Lys177 each coordinate NADP(+). Lys177 serves as the catalytic Proton acceptor. Substrate is bound by residues Arg179, His186, 200–203 (FGEY), Arg213, and Tyr292.

This sequence belongs to the NAD(P)-dependent epimerase/dehydratase family. HldD subfamily. In terms of assembly, homopentamer. Requires NADP(+) as cofactor.

The catalysed reaction is ADP-D-glycero-beta-D-manno-heptose = ADP-L-glycero-beta-D-manno-heptose. Its pathway is nucleotide-sugar biosynthesis; ADP-L-glycero-beta-D-manno-heptose biosynthesis; ADP-L-glycero-beta-D-manno-heptose from D-glycero-beta-D-manno-heptose 7-phosphate: step 4/4. Functionally, catalyzes the interconversion between ADP-D-glycero-beta-D-manno-heptose and ADP-L-glycero-beta-D-manno-heptose via an epimerization at carbon 6 of the heptose. This chain is ADP-L-glycero-D-manno-heptose-6-epimerase, found in Burkholderia thailandensis (strain ATCC 700388 / DSM 13276 / CCUG 48851 / CIP 106301 / E264).